We begin with the raw amino-acid sequence, 348 residues long: MTLNRDMVSPQEDRGEKAVEFSLRPARLADYVGQPQVQEQMEVFIPAARARHEALDHVLIFGPPGLGKTTLSHIIANELEVNLRQTSGPVLERPGDLAALLTNLEPRDVLFIDEIHRLSPVVEEVLYPAMEDRQIDIMIGEGPAARSIKLDLVPFTLVGATTRAGLLTSPLRDRFGIVQRLEFYAVDHLVLIVERTARILGMAMEKEGALEIARRSRGTPRIANRLLRRVRDYAEIKGDGQVTRQVAQKALDLLDVDSHGFDTMDRKLLLAMLEKFDGGPVGVDSLAAAIGEERGTIEDVIEPFLLQQGFVMRTPRGRMATRHAYLHFGLKPAVKMVPQEVSDLFPNE.

The tract at residues 1–184 (MTLNRDMVSP…FGIVQRLEFY (184 aa)) is large ATPase domain (RuvB-L). The ATP site is built by Leu-23, Arg-24, Gly-65, Lys-68, Thr-69, Thr-70, Arg-174, Tyr-184, and Arg-221. A Mg(2+)-binding site is contributed by Thr-69. Residues 185–255 (AVDHLVLIVE…VAQKALDLLD (71 aa)) form a small ATPAse domain (RuvB-S) region. The tract at residues 258–348 (SHGFDTMDRK…QEVSDLFPNE (91 aa)) is head domain (RuvB-H). DNA-binding residues include Arg-294, Arg-313, and Arg-318.

It belongs to the RuvB family. As to quaternary structure, homohexamer. Forms an RuvA(8)-RuvB(12)-Holliday junction (HJ) complex. HJ DNA is sandwiched between 2 RuvA tetramers; dsDNA enters through RuvA and exits via RuvB. An RuvB hexamer assembles on each DNA strand where it exits the tetramer. Each RuvB hexamer is contacted by two RuvA subunits (via domain III) on 2 adjacent RuvB subunits; this complex drives branch migration. In the full resolvosome a probable DNA-RuvA(4)-RuvB(12)-RuvC(2) complex forms which resolves the HJ.

The protein resides in the cytoplasm. It carries out the reaction ATP + H2O = ADP + phosphate + H(+). The RuvA-RuvB-RuvC complex processes Holliday junction (HJ) DNA during genetic recombination and DNA repair, while the RuvA-RuvB complex plays an important role in the rescue of blocked DNA replication forks via replication fork reversal (RFR). RuvA specifically binds to HJ cruciform DNA, conferring on it an open structure. The RuvB hexamer acts as an ATP-dependent pump, pulling dsDNA into and through the RuvAB complex. RuvB forms 2 homohexamers on either side of HJ DNA bound by 1 or 2 RuvA tetramers; 4 subunits per hexamer contact DNA at a time. Coordinated motions by a converter formed by DNA-disengaged RuvB subunits stimulates ATP hydrolysis and nucleotide exchange. Immobilization of the converter enables RuvB to convert the ATP-contained energy into a lever motion, pulling 2 nucleotides of DNA out of the RuvA tetramer per ATP hydrolyzed, thus driving DNA branch migration. The RuvB motors rotate together with the DNA substrate, which together with the progressing nucleotide cycle form the mechanistic basis for DNA recombination by continuous HJ branch migration. Branch migration allows RuvC to scan DNA until it finds its consensus sequence, where it cleaves and resolves cruciform DNA. This Nitrosococcus oceani (strain ATCC 19707 / BCRC 17464 / JCM 30415 / NCIMB 11848 / C-107) protein is Holliday junction branch migration complex subunit RuvB.